The chain runs to 505 residues: Formate--tetrahydrofolate ligase (505 aa).

Belongs to the formate--tetrahydrofolate ligase family.

It catalyses the reaction (6S)-5,6,7,8-tetrahydrofolate + formate + ATP = (6R)-10-formyltetrahydrofolate + ADP + phosphate. The protein operates within one-carbon metabolism; tetrahydrofolate interconversion. This is Formate--tetrahydrofolate ligase (fhs) from Bifidobacterium longum (strain NCC 2705).